The primary structure comprises 75 residues: Molt-inhibiting hormone (75 aa).

3 disulfide bridges follow: Cys7–Cys44, Cys24–Cys40, and Cys27–Cys53. Alanine amide is present on Ala75.

The protein belongs to the arthropod CHH/MIH/GIH/VIH hormone family.

It localises to the secreted. In terms of biological role, inhibits Y-organs where molting hormone (ecdysteroid) is secreted. A molting cycle is initiated when MIH secretion diminishes or stops. The chain is Molt-inhibiting hormone from Procambarus clarkii (Red swamp crayfish).